The following is a 276-amino-acid chain: Transmembrane protein 53 (276 aa).

The chain crosses the membrane as a helical span at residues 170 to 190 (LLLLAAFALVVILFHFLLAPF).

Belongs to the TMEM53 family. In terms of tissue distribution, expressed in liver (at protein level).

It localises to the nucleus outer membrane. In terms of biological role, negatively regulates bone morphogenetic protein (BMP) signaling in osteoblast lineage cells by blocking cytoplasm-nucleus translocation of phosphorylated SMAD1/5/9 proteins. The sequence is that of Transmembrane protein 53 (Tmem53) from Mus musculus (Mouse).